We begin with the raw amino-acid sequence, 1199 residues long: DNA-directed RNA polymerase subunit beta' (1199 aa).

Positions 60, 62, 75, and 78 each coordinate Zn(2+). Positions 449, 451, and 453 each coordinate Mg(2+). Zn(2+)-binding residues include cysteine 818, cysteine 892, cysteine 899, and cysteine 902.

Belongs to the RNA polymerase beta' chain family. The RNAP catalytic core consists of 2 alpha, 1 beta, 1 beta' and 1 omega subunit. When a sigma factor is associated with the core the holoenzyme is formed, which can initiate transcription. Mg(2+) is required as a cofactor. The cofactor is Zn(2+).

The enzyme catalyses RNA(n) + a ribonucleoside 5'-triphosphate = RNA(n+1) + diphosphate. In terms of biological role, DNA-dependent RNA polymerase catalyzes the transcription of DNA into RNA using the four ribonucleoside triphosphates as substrates. This Exiguobacterium sibiricum (strain DSM 17290 / CCUG 55495 / CIP 109462 / JCM 13490 / 255-15) protein is DNA-directed RNA polymerase subunit beta'.